A 543-amino-acid chain; its full sequence is Chaperonin GroEL (543 aa).

ATP is bound by residues 29 to 32 (TLGP), Lys50, 86 to 90 (DGTTT), Gly415, and Asp495.

This sequence belongs to the chaperonin (HSP60) family. Forms a cylinder of 14 subunits composed of two heptameric rings stacked back-to-back. Interacts with the co-chaperonin GroES.

Its subcellular location is the cytoplasm. It carries out the reaction ATP + H2O + a folded polypeptide = ADP + phosphate + an unfolded polypeptide.. Its function is as follows. Together with its co-chaperonin GroES, plays an essential role in assisting protein folding. The GroEL-GroES system forms a nano-cage that allows encapsulation of the non-native substrate proteins and provides a physical environment optimized to promote and accelerate protein folding. This chain is Chaperonin GroEL, found in Karelsulcia muelleri (strain GWSS) (Sulcia muelleri).